The following is a 560-amino-acid chain: 2-succinyl-5-enolpyruvyl-6-hydroxy-3-cyclohexene-1-carboxylate synthase (560 aa).

It belongs to the TPP enzyme family. MenD subfamily. In terms of assembly, homodimer. Mg(2+) serves as cofactor. It depends on Mn(2+) as a cofactor. Thiamine diphosphate is required as a cofactor.

It carries out the reaction isochorismate + 2-oxoglutarate + H(+) = 5-enolpyruvoyl-6-hydroxy-2-succinyl-cyclohex-3-ene-1-carboxylate + CO2. It participates in quinol/quinone metabolism; 1,4-dihydroxy-2-naphthoate biosynthesis; 1,4-dihydroxy-2-naphthoate from chorismate: step 2/7. Its pathway is quinol/quinone metabolism; menaquinone biosynthesis. Its function is as follows. Catalyzes the thiamine diphosphate-dependent decarboxylation of 2-oxoglutarate and the subsequent addition of the resulting succinic semialdehyde-thiamine pyrophosphate anion to isochorismate to yield 2-succinyl-5-enolpyruvyl-6-hydroxy-3-cyclohexene-1-carboxylate (SEPHCHC). In Lactococcus lactis subsp. lactis (strain IL1403) (Streptococcus lactis), this protein is 2-succinyl-5-enolpyruvyl-6-hydroxy-3-cyclohexene-1-carboxylate synthase.